The chain runs to 58 residues: uncharacterized protein (58 aa).

A coiled-coil region spans residues 3 to 52; that stretch reads KVILEHLQRIEKQLEILNSKIENFLGFEELSEEELKELDEIEAKMEKGEK.

This is an uncharacterized protein from Archaeoglobus fulgidus (strain ATCC 49558 / DSM 4304 / JCM 9628 / NBRC 100126 / VC-16).